The primary structure comprises 320 residues: Myeloid-associated differentiation marker (320 aa).

2 MARVEL domains span residues 25–157 and 162–317; these read ALTQ…ARPG and YMAT…RLVF. A run of 8 helical transmembrane segments spans residues 35-55, 61-81, 95-115, 131-151, 165-185, 197-217, 233-253, and 292-312; these read LLQL…GAWT, WAMF…IVEL, FPIT…IIYP, AIAA…EVAW, TVPG…FAFI, LEWC…TILL, FLSG…VLWP, and LAVS…LVYS.

Belongs to the MAL family.

It localises to the membrane. The sequence is that of Myeloid-associated differentiation marker (Myadm) from Mus musculus (Mouse).